We begin with the raw amino-acid sequence, 443 residues long: Omega-6 fatty acid desaturase, chloroplastic (443 aa).

A chloroplast-targeting transit peptide spans 1 to 64 (MASRIADSLF…AKKRIGCIKA (64 aa)). A Histidine box-1 motif is present at residues 166–170 (HDCAH). Residues 202-206 (HDRHH) carry the Histidine box-2 motif. The Histidine box-3 signature appears at 362-366 (HIPHH).

The protein belongs to the fatty acid desaturase type 1 family.

The protein resides in the plastid. The protein localises to the chloroplast membrane. The catalysed reaction is a (9Z)-octadecenoyl-containing glycerolipid + 2 reduced [2Fe-2S]-[ferredoxin] + O2 + 2 H(+) = a (9Z,12Z)-octadecadienoyl-containing glycerolipid + 2 oxidized [2Fe-2S]-[ferredoxin] + 2 H2O. It functions in the pathway lipid metabolism; polyunsaturated fatty acid biosynthesis. Its function is as follows. Chloroplast omega-6 fatty acid desaturase introduces the second double bond in the biosynthesis of 16:3 and 18:3 fatty acids, important constituents of plant membranes. It is thought to use ferredoxin as an electron donor and to act on fatty acids esterified to galactolipids, sulfolipids and phosphatidylglycerol. This Brassica napus (Rape) protein is Omega-6 fatty acid desaturase, chloroplastic.